The sequence spans 546 residues: Chaperonin GroEL (546 aa).

Residues 30–33 (TLGP), Lys51, 87–91 (DGTTT), Gly415, 479–481 (NAA), and Asp495 contribute to the ATP site. Positions 526–546 (KKGDSAPAGGGMGDMGGMGMM) are disordered. The segment covering 533–546 (AGGGMGDMGGMGMM) has biased composition (gly residues).

Belongs to the chaperonin (HSP60) family. Forms a cylinder of 14 subunits composed of two heptameric rings stacked back-to-back. Interacts with the co-chaperonin GroES.

It is found in the cytoplasm. It carries out the reaction ATP + H2O + a folded polypeptide = ADP + phosphate + an unfolded polypeptide.. Functionally, together with its co-chaperonin GroES, plays an essential role in assisting protein folding. The GroEL-GroES system forms a nano-cage that allows encapsulation of the non-native substrate proteins and provides a physical environment optimized to promote and accelerate protein folding. The sequence is that of Chaperonin GroEL from Thioalkalivibrio sulfidiphilus (strain HL-EbGR7).